We begin with the raw amino-acid sequence, 189 residues long: Ribosome hibernation promotion factor (189 aa).

Belongs to the HPF/YfiA ribosome-associated protein family. Long HPF subfamily. Interacts with 100S ribosomes.

The protein resides in the cytoplasm. Required for dimerization of active 70S ribosomes into 100S ribosomes in stationary phase; 100S ribosomes are translationally inactive and sometimes present during exponential growth. The chain is Ribosome hibernation promotion factor from Staphylococcus epidermidis (strain ATCC 35984 / DSM 28319 / BCRC 17069 / CCUG 31568 / BM 3577 / RP62A).